Consider the following 618-residue polypeptide: Serine/threonine-protein kinase TNNI3K (618 aa).

Glycine 2 is lipidated: N-myristoyl glycine. Residues 21 to 51 (SESYVITIERLEDDLKIKEKELTELRNIFGS) adopt a coiled-coil conformation. 10 ANK repeats span residues 66–96 (NGLSLLHLCCICGGNKSHIRTLMLKGLRPSR), 100–129 (NGFTALHLAVYKDNAELITSLLHGGADIQQ), 133–162 (GGLTALHIATIAGHLEAADVLLQHGANVNI), 166–195 (VFFTPLHIAAYYGHEQVTRLLLKFGADVNV), 199–228 (VGDRPLHLASAKGFLNIAKLLMEEGSKADV), 234–263 (EDHVPLHFCSRFGHHDIVKYLLQNDLEVQP), 269–298 (YGDTPLHLACYNGKFEVAKEIIQISGTESL), 304–335 (FSETAFHSACTYGKSIDLVKFLLDQNVININH), 339–368 (DGHTGLHSACYHGHIHLVQFLLDNGADMNL), and 381–410 (DEQTCLMWAYEKGHDAIVTLLKHYKRPQDE). In terms of domain architecture, Protein kinase spans 463–618 (IEFHEIIGSG…TAHTIYLLAP (156 aa)). ATP is bound by residues 469–477 (IGSGSFGKV) and lysine 490. Aspartate 588 (proton acceptor) is an active-site residue.

It belongs to the protein kinase superfamily. TKL Ser/Thr protein kinase family. MAP kinase kinase kinase subfamily. Interacts with TNNI3, ACTC, ACTA1, MYBPC3, AIP, FABP3 and HADHB. The cofactor is Mg(2+). In terms of processing, autophosphorylated.

It is found in the nucleus. It localises to the cytoplasm. The enzyme catalyses L-seryl-[protein] + ATP = O-phospho-L-seryl-[protein] + ADP + H(+). It carries out the reaction L-threonyl-[protein] + ATP = O-phospho-L-threonyl-[protein] + ADP + H(+). May play a role in cardiac physiology. In Pongo abelii (Sumatran orangutan), this protein is Serine/threonine-protein kinase TNNI3K.